The sequence spans 21 residues: 23S rRNA methylase leader peptide (21 aa).

Its function is as follows. Involved in erythromycin resistance. In Corynebacterium diphtheriae, this protein is 23S rRNA methylase leader peptide.